The following is a 157-amino-acid chain: Glutaredoxin-2, mitochondrial (157 aa).

The N-terminal 18 residues, 1–18, are a transit peptide targeting the mitochondrion; that stretch reads MYWRRAALVGTRLIPVRS. Ser20 carries the post-translational modification Phosphoserine. The region spanning 51–151 is the Glutaredoxin domain; sequence VNQIQETISN…PLVHQCHLKN (101 aa). Cys62 is a binding site for [2Fe-2S] cluster. Lys68 serves as a coordination point for glutathione. The residue at position 71 (Cys71) is an S-glutathionyl cysteine; alternate. Cysteines 71 and 74 form a disulfide. Glutathione contacts are provided by Gln103 and Val115. Residue Cys147 coordinates [2Fe-2S] cluster.

This sequence belongs to the glutaredoxin family. In terms of assembly, monomer; active form. Homodimer; inactive form. The homodimer is probably linked by 1 2Fe-2S cluster.

Its subcellular location is the mitochondrion. With respect to regulation, the 2Fe-2S present in the homodimer leads to inactivation of the enzyme. The 2Fe-2S may serve as a redox sensor: the presence of one-electron oxidants or reductants leading to the loss of the 2Fe-2S cluster, subsequent monomerization and activation of the enzyme. Its function is as follows. Glutathione-dependent oxidoreductase that facilitates the maintenance of mitochondrial redox homeostasis upon induction of apoptosis by oxidative stress. Involved in response to hydrogen peroxide and regulation of apoptosis caused by oxidative stress. Acts as a very efficient catalyst of monothiol reactions because of its high affinity for protein glutathione-mixed disulfides. Can receive electrons not only from glutathione (GSH), but also from thioredoxin reductase supporting both monothiol and dithiol reactions. Efficiently catalyzes both glutathionylation and deglutathionylation of mitochondrial complex I, which in turn regulates the superoxide production by the complex. Overexpression decreases the susceptibility to apoptosis and prevents loss of cardiolipin and cytochrome c release. The polypeptide is Glutaredoxin-2, mitochondrial (GLRX2) (Bos taurus (Bovine)).